The primary structure comprises 245 residues: 1-(5-phosphoribosyl)-5-[(5-phosphoribosylamino)methylideneamino] imidazole-4-carboxamide isomerase (245 aa).

The active-site Proton acceptor is aspartate 8. Aspartate 130 (proton donor) is an active-site residue.

Belongs to the HisA/HisF family.

Its subcellular location is the cytoplasm. The catalysed reaction is 1-(5-phospho-beta-D-ribosyl)-5-[(5-phospho-beta-D-ribosylamino)methylideneamino]imidazole-4-carboxamide = 5-[(5-phospho-1-deoxy-D-ribulos-1-ylimino)methylamino]-1-(5-phospho-beta-D-ribosyl)imidazole-4-carboxamide. Its pathway is amino-acid biosynthesis; L-histidine biosynthesis; L-histidine from 5-phospho-alpha-D-ribose 1-diphosphate: step 4/9. This chain is 1-(5-phosphoribosyl)-5-[(5-phosphoribosylamino)methylideneamino] imidazole-4-carboxamide isomerase, found in Pseudomonas putida (strain ATCC 47054 / DSM 6125 / CFBP 8728 / NCIMB 11950 / KT2440).